The sequence spans 155 residues: Ribosomal RNA large subunit methyltransferase H (155 aa).

Residues L72, G103, and L122–L127 contribute to the S-adenosyl-L-methionine site.

This sequence belongs to the RNA methyltransferase RlmH family. In terms of assembly, homodimer.

The protein resides in the cytoplasm. The enzyme catalyses pseudouridine(1915) in 23S rRNA + S-adenosyl-L-methionine = N(3)-methylpseudouridine(1915) in 23S rRNA + S-adenosyl-L-homocysteine + H(+). Functionally, specifically methylates the pseudouridine at position 1915 (m3Psi1915) in 23S rRNA. The polypeptide is Ribosomal RNA large subunit methyltransferase H (Klebsiella pneumoniae (strain 342)).